The following is a 516-amino-acid chain: Delta(24)-sterol reductase (516 aa).

Residues 1–22 (MEPAVSLAVCALLFLLWVRVKG) form the signal peptide. The Lumenal portion of the chain corresponds to 23-31 (LEFVLIHQR). Residues 32 to 52 (WVFVCLFLLPLSLIFDIYYYV) traverse the membrane as a helical segment. The Cytoplasmic segment spans residues 53-516 (RAWVVFKLSS…YDKICKAARH (464 aa)). Residues 58–234 (FKLSSAPRLH…VAAEIRIIPA (177 aa)) enclose the FAD-binding PCMH-type domain. 163 to 175 (TVGGLIMGTGIES) provides a ligand contact to FAD.

It belongs to the FAD-binding oxidoreductase/transferase type 4 family. Interacts with DHCR7; this interaction regulates DHCR7 activity. Requires FAD as cofactor.

It localises to the endoplasmic reticulum membrane. The protein localises to the golgi apparatus membrane. It catalyses the reaction cholesterol + NADP(+) = desmosterol + NADPH + H(+). The enzyme catalyses lanosterol + NADPH + H(+) = 24,25-dihydrolanosterol + NADP(+). The catalysed reaction is 5alpha-cholest-8-en-3beta-ol + NADP(+) = zymosterol + NADPH + H(+). Its pathway is steroid biosynthesis; cholesterol biosynthesis. Functionally, catalyzes the reduction of the delta-24 double bond of sterol intermediates during cholesterol biosynthesis. In addition to its cholesterol-synthesizing activity, can protect cells from oxidative stress by reducing caspase 3 activity during apoptosis induced by oxidative stress. Also protects against amyloid-beta peptide-induced apoptosis. This chain is Delta(24)-sterol reductase (Dhcr24), found in Rattus norvegicus (Rat).